The sequence spans 239 residues: Guanylate kinase (239 aa).

The Guanylate kinase-like domain maps to 55–235; that stretch reads GRIFVITGPS…TLAELQAILL (181 aa). 62–69 serves as a coordination point for ATP; sequence GPSGVGKS.

Belongs to the guanylate kinase family.

Its subcellular location is the cytoplasm. It carries out the reaction GMP + ATP = GDP + ADP. Its function is as follows. Essential for recycling GMP and indirectly, cGMP. The protein is Guanylate kinase (gmk) of Mycoplasma pneumoniae (strain ATCC 29342 / M129 / Subtype 1) (Mycoplasmoides pneumoniae).